Here is a 275-residue protein sequence, read N- to C-terminus: Probable histone chaperone asf-1 (275 aa).

Composition is skewed to acidic residues over residues 157–166 (EDPVAEPVED), 183–207 (DGQEDDDEEEEDDDEMEANAEEVDL), and 230–247 (KMEDDGANEDVDMADDEP). Residues 157 to 275 (EDPVAEPVED…SDKTNNEMVQ (119 aa)) form a disordered region. The span at 265 to 275 (LSDKTNNEMVQ) shows a compositional bias: basic and acidic residues.

The protein belongs to the ASF1 family. Interacts with histone H3 and histone H4.

It localises to the nucleus. In terms of biological role, histone chaperone that facilitates histone deposition and histone exchange and removal during nucleosome assembly and disassembly. This chain is Probable histone chaperone asf-1, found in Caenorhabditis elegans.